A 908-amino-acid polypeptide reads, in one-letter code: Glutamate receptor ionotropic, kainate 2 (908 aa).

A signal peptide spans 1 to 31 (MKIIFPILSNPVFRRTVKLLLCLLWIGYSQG). Over 32–561 (TTHVLRFGGI…VFSFLNPLSP (530 aa)) the chain is Extracellular. Asn-67, Asn-73, Asn-275, Asn-378, Asn-412, Asn-423, and Asn-430 each carry an N-linked (GlcNAc...) asparagine glycan. A disulfide bridge connects residues Cys-96 and Cys-347. L-glutamate-binding residues include Pro-516, Ala-518, and Arg-523. A glycan (N-linked (GlcNAc...) asparagine) is linked at Asn-546. A helical membrane pass occupies residues 562–582 (DIWMYVLLACLGVSCVLFVIA). Residues 583–638 (RFSPYEWYNPHPCNPDSDVVENNFTLLNSFWFGVGALMRQGSELMPKALSTRIVGG) lie on the Cytoplasmic side of the membrane. Residues 639–659 (IWWFFTLIIISSYTANLAAFL) traverse the membrane as a helical segment. Over 660-819 (TVERMESPID…KEASALGVQN (160 aa)) the chain is Extracellular. L-glutamate is bound by residues Ala-689, Thr-690, and Glu-738. Residues Cys-750 and Cys-804 are joined by a disulfide bond. Residue Asn-751 is glycosylated (N-linked (GlcNAc...) asparagine). Residues 820 to 840 (IGGIFIVLAAGLVLSVFVAVG) form a helical membrane-spanning segment. The Cytoplasmic segment spans residues 841–908 (EFLYKSKKNA…RRLPGKETMA (68 aa)). 2 positions are modified to phosphoserine; by PKC: Ser-846 and Ser-868. Lys-886 is covalently cross-linked (Glycyl lysine isopeptide (Lys-Gly) (interchain with G-Cter in SUMO1)).

This sequence belongs to the glutamate-gated ion channel (TC 1.A.10.1) family. GRIK2 subfamily. Homotetramer and heterotetramer with GRIK5. Tetramers may be formed by the dimerization of dimers. Assembles into a kainate-gated homomeric channel that does not bind AMPA. Can form functional heteromeric receptors with GRIK3, GRIK4 and GRIK5. Interacts with NETO2. Interacts with DLG4. Interacts with NETO2. Interacts (via C-terminus) with KLHL17 (via kelch repeats); the interaction targets GRIK2 for degradation via ubiquitin-proteasome pathway. Sumoylation mediates kainate receptor-mediated endocytosis and regulates synaptic transmission. Sumoylation is enhanced by PIAS3 and desumoylated by SENP1. Post-translationally, ubiquitinated. Ubiquitination regulates the GRIK2 levels at the synapse by leading kainate receptor degradation through proteasome. In terms of processing, phosphorylated by PKC at Ser-868 upon agonist activation, this directly enhance sumoylation.

Its subcellular location is the cell membrane. It is found in the postsynaptic cell membrane. The catalysed reaction is Ca(2+)(in) = Ca(2+)(out). It carries out the reaction Na(+)(in) = Na(+)(out). With respect to regulation, cold receptor activity activated by temperatures between 10-19 degrees Celsius. In terms of biological role, ionotropic glutamate receptor that functions as a cation-permeable ligand-gated ion channel, gated by L-glutamate and the glutamatergic agonist kainic acid. L-glutamate acts as an excitatory neurotransmitter at many synapses in the central nervous system. Binding of the excitatory neurotransmitter L-glutamate induces a conformation change, leading to the opening of the cation channel, and thereby converts the chemical signal to an electrical impulse. The receptor then desensitizes rapidly and enters a transient inactive state, characterized by the presence of bound agonist. Modulates cell surface expression of NETO2. In association with GRIK3, involved in presynaptic facilitation of glutamate release at hippocampal mossy fiber synapses. Functionally, independent of its ionotropic glutamate receptor activity, acts as a thermoreceptor conferring sensitivity to cold temperatures. Functions in dorsal root ganglion neurons. In Macaca fascicularis (Crab-eating macaque), this protein is Glutamate receptor ionotropic, kainate 2 (GRIK2).